A 458-amino-acid chain; its full sequence is Cytoplasmic tRNA 2-thiolation protein 2 (458 aa).

The protein belongs to the CTU2/NCS2 family.

Its subcellular location is the cytoplasm. Its pathway is tRNA modification; 5-methoxycarbonylmethyl-2-thiouridine-tRNA biosynthesis. Functionally, plays a central role in 2-thiolation of mcm(5)S(2)U at tRNA wobble positions of tRNA(Lys), tRNA(Glu) and tRNA(Gln). May act by forming a heterodimer with NCS6/CTU1 that ligates sulfur from thiocarboxylated URM1 onto the uridine of tRNAs at wobble position. This is Cytoplasmic tRNA 2-thiolation protein 2 from Arabidopsis thaliana (Mouse-ear cress).